Here is a 314-residue protein sequence, read N- to C-terminus: tRNA(Ile)-lysidine synthase, chloroplastic (314 aa).

31-36 is an ATP binding site; sequence SGGQDS.

It belongs to the tRNA(Ile)-lysidine synthase family.

It is found in the plastid. It localises to the chloroplast. The enzyme catalyses cytidine(34) in tRNA(Ile2) + L-lysine + ATP = lysidine(34) in tRNA(Ile2) + AMP + diphosphate + H(+). Its function is as follows. Ligates lysine onto the cytidine present at position 34 of the AUA codon-specific tRNA(Ile) that contains the anticodon CAU, in an ATP-dependent manner. Cytidine is converted to lysidine, thus changing the amino acid specificity of the tRNA from methionine to isoleucine. The protein is tRNA(Ile)-lysidine synthase, chloroplastic of Cyanidium caldarium (Red alga).